The chain runs to 691 residues: Penicillin-binding protein 2D (691 aa).

The Cytoplasmic segment spans residues 1–19 (MDAMTNKRLRLTLKTVRAF). Residues 20–40 (IFLGAFAALAAAAVFMTVILI) form a helical; Signal-anchor for type II membrane protein membrane-spanning segment. Residues 41–691 (AKYQGAPSVQ…WWDKWLGRHH (651 aa)) are Extracellular-facing. A transglycosylase region spans residues 55 to 223 (TILYASDGSK…PSGYSPYVNE (169 aa)). The Proton donor; for transglycosylase activity role is filled by Glu94. Residues 327-605 (VGFSAIDPRT…AKTIWADFME (279 aa)) are transpeptidase. Ser365 serves as the catalytic Acyl-ester intermediate; for transpeptidase activity. The interval 663-691 (AKQTKDRLPSKEKPASEKKWWDKWLGRHH) is disordered. Over residues 664–691 (KQTKDRLPSKEKPASEKKWWDKWLGRHH) the composition is skewed to basic and acidic residues.

The protein in the N-terminal section; belongs to the glycosyltransferase 51 family. In the C-terminal section; belongs to the transpeptidase family.

It localises to the cell membrane. The catalysed reaction is [GlcNAc-(1-&gt;4)-Mur2Ac(oyl-L-Ala-gamma-D-Glu-L-Lys-D-Ala-D-Ala)](n)-di-trans,octa-cis-undecaprenyl diphosphate + beta-D-GlcNAc-(1-&gt;4)-Mur2Ac(oyl-L-Ala-gamma-D-Glu-L-Lys-D-Ala-D-Ala)-di-trans,octa-cis-undecaprenyl diphosphate = [GlcNAc-(1-&gt;4)-Mur2Ac(oyl-L-Ala-gamma-D-Glu-L-Lys-D-Ala-D-Ala)](n+1)-di-trans,octa-cis-undecaprenyl diphosphate + di-trans,octa-cis-undecaprenyl diphosphate + H(+). The enzyme catalyses Preferential cleavage: (Ac)2-L-Lys-D-Ala-|-D-Ala. Also transpeptidation of peptidyl-alanyl moieties that are N-acyl substituents of D-alanine.. Its pathway is cell wall biogenesis; peptidoglycan biosynthesis. In terms of biological role, involved in the polymerization and cross-linking of spore peptidoglycan. May be required for synthesis of the spore germ cell wall, the first layer of peptidoglycan synthesized on the surface of the inner forespore membrane. This is Penicillin-binding protein 2D (pbpG) from Bacillus subtilis (strain 168).